Consider the following 410-residue polypeptide: UPF0761 membrane protein Csal_1895 (410 aa).

The next 6 helical transmembrane spans lie at 43–63, 99–119, 139–159, 180–200, 212–232, and 247–267; these read LFAV…IPSF, SLTL…MVTV, FLLY…GFLL, VAFL…FIYM, AVAG…AFSL, and FAAV…VLVG.

Belongs to the UPF0761 family.

Its subcellular location is the cell inner membrane. The chain is UPF0761 membrane protein Csal_1895 from Chromohalobacter salexigens (strain ATCC BAA-138 / DSM 3043 / CIP 106854 / NCIMB 13768 / 1H11).